The chain runs to 553 residues: Phospholipase B (553 aa).

Residues 1-35 form the signal peptide; it reads MIRFGNPSSSDKRRQRCRSWYWGGLLLLWAVAETR. Asparagine 313, asparagine 416, and asparagine 531 each carry an N-linked (GlcNAc...) asparagine glycan.

The protein belongs to the phospholipase B-like family. Expressed by the venom gland.

The protein localises to the secreted. May cause hemolysis or may be involved in protein folding and translation. The chain is Phospholipase B from Crotalus adamanteus (Eastern diamondback rattlesnake).